The sequence spans 119 residues: Ribonuclease P protein component (119 aa).

It belongs to the RnpA family. In terms of assembly, consists of a catalytic RNA component (M1 or rnpB) and a protein subunit.

It carries out the reaction Endonucleolytic cleavage of RNA, removing 5'-extranucleotides from tRNA precursor.. Functionally, RNaseP catalyzes the removal of the 5'-leader sequence from pre-tRNA to produce the mature 5'-terminus. It can also cleave other RNA substrates such as 4.5S RNA. The protein component plays an auxiliary but essential role in vivo by binding to the 5'-leader sequence and broadening the substrate specificity of the ribozyme. The polypeptide is Ribonuclease P protein component (Dictyoglomus turgidum (strain DSM 6724 / Z-1310)).